We begin with the raw amino-acid sequence, 338 residues long: Galaxin (338 aa).

The first 23 residues, 1-23, serve as a signal peptide directing secretion; sequence MKPSGAFLSLCVVLLSLATHCFS. The span at 30-47 shows a compositional bias: basic and acidic residues; the sequence is RRDAHSDTNALKSRDRRQ. The interval 30 to 50 is disordered; sequence RRDAHSDTNALKSRDRRQAPA.

As to expression, component of the acid-insoluble organic matrix of the aragonitic skeleton (at protein level). Initially, expressed in an aboral submarginal ring and then along calcifying septa.

Its subcellular location is the secreted. The chain is Galaxin from Acropora millepora (Staghorn coral).